The primary structure comprises 926 residues: Tyrosine-protein phosphatase non-receptor type 4 (926 aa).

Residues 29–312 enclose the FERM domain; it reads VVCNILLLDN…EHHTFFRLDR (284 aa). Disordered stretches follow at residues 379-412, 429-474, and 492-511; these read SDDR…TRVR, SEDF…KKNS, and NESF…GGIP. 2 stretches are compositionally biased toward polar residues: residues 398-408 and 432-455; these read NHRNSSFTQEA and FVSQ…PSQE. Ser-474 carries the post-translational modification Phosphoserine. One can recognise a PDZ domain in the interval 517–589; the sequence is LIKMKPDENG…DQVVLFIKAS (73 aa). The region spanning 655–911 is the Tyrosine-protein phosphatase domain; the sequence is VLAQFDQLYR…RFVCEAILKV (257 aa). Substrate contacts are provided by residues Asp-820, 852–858, and Gln-896; that span reads CSAGIGR. The active-site Phosphocysteine intermediate is Cys-852.

The protein belongs to the protein-tyrosine phosphatase family. Non-receptor class subfamily. Highly expressed in testis. Specifically expressed in spermatocytes and spermatids within seminiferous tubules (at protein level).

The protein resides in the cell membrane. It is found in the cytoplasm. Its subcellular location is the cytoskeleton. The catalysed reaction is O-phospho-L-tyrosyl-[protein] + H2O = L-tyrosyl-[protein] + phosphate. Its function is as follows. Phosphatase that plays a role in immunity, learning, synaptic plasticity or cell homeostasis. Regulates neuronal cell homeostasis by protecting neurons against apoptosis. Negatively regulates TLR4-induced interferon beta production by dephosphorylating adapter TICAM2 and inhibiting subsequent TRAM-TRIF interaction. Dephosphorylates also the immunoreceptor tyrosine-based activation motifs/ITAMs of the TCR zeta subunit and thereby negatively regulates TCR-mediated signaling pathway. May act at junctions between the membrane and the cytoskeleton. The protein is Tyrosine-protein phosphatase non-receptor type 4 (Ptpn4) of Mus musculus (Mouse).